We begin with the raw amino-acid sequence, 201 residues long: Lipoprotein signal peptidase (201 aa).

A run of 2 helical transmembrane segments spans residues Ser73 to Ile93 and Thr97 to Asp117. Active-site residues include Asp126 and Asp144. A helical membrane pass occupies residues Tyr135–Ile155.

It belongs to the peptidase A8 family.

Its subcellular location is the cell inner membrane. The enzyme catalyses Release of signal peptides from bacterial membrane prolipoproteins. Hydrolyzes -Xaa-Yaa-Zaa-|-(S,diacylglyceryl)Cys-, in which Xaa is hydrophobic (preferably Leu), and Yaa (Ala or Ser) and Zaa (Gly or Ala) have small, neutral side chains.. Its pathway is protein modification; lipoprotein biosynthesis (signal peptide cleavage). This protein specifically catalyzes the removal of signal peptides from prolipoproteins. This Rickettsia africae (strain ESF-5) protein is Lipoprotein signal peptidase.